Consider the following 377-residue polypeptide: Alanine racemase (377 aa).

The active-site Proton acceptor; specific for D-alanine is the lysine 37. Lysine 37 bears the N6-(pyridoxal phosphate)lysine mark. Residue arginine 135 participates in substrate binding. Catalysis depends on tyrosine 271, which acts as the Proton acceptor; specific for L-alanine. Methionine 319 contributes to the substrate binding site.

The protein belongs to the alanine racemase family. Pyridoxal 5'-phosphate serves as cofactor.

It carries out the reaction L-alanine = D-alanine. It participates in amino-acid biosynthesis; D-alanine biosynthesis; D-alanine from L-alanine: step 1/1. In terms of biological role, catalyzes the interconversion of L-alanine and D-alanine. May also act on other amino acids. The sequence is that of Alanine racemase (alr) from Helicobacter pylori (strain HPAG1).